Reading from the N-terminus, the 367-residue chain is Probable butyrate kinase (367 aa).

The protein belongs to the acetokinase family.

Its subcellular location is the cytoplasm. The enzyme catalyses butanoate + ATP = butanoyl phosphate + ADP. This chain is Probable butyrate kinase, found in Bacillus cereus (strain ZK / E33L).